The chain runs to 304 residues: MAQVKRIRRSISGILVLDKPRGMSSNQALQKVRWLLNAEKAGHTGSLDPLATGVLPLCFGEATKFSQYLLDADKGYETVMRMGITTTTGDAEGEMLAEREVTVGRDDLEQALPRFRGDIEQVPPMYSALKKDGQPLYKLARAGEVVEREARSVTITRLDLLSFEPPCATLAVSCSKGTYVRTLVEDLGQVLGCGAHVAALRRTQAGPFVLAQAITLETLERVHAEGGPEALDQFLMPEDSGLLHWPVLQLSEHSAYYWLHGQPVRAPEAPKFGWLRVQDHTGRFIGIGEVTDDGRIAPRRLIRS.

The active-site Nucleophile is the Asp48.

Belongs to the pseudouridine synthase TruB family. Type 1 subfamily.

It carries out the reaction uridine(55) in tRNA = pseudouridine(55) in tRNA. Functionally, responsible for synthesis of pseudouridine from uracil-55 in the psi GC loop of transfer RNAs. This Pseudomonas paraeruginosa (strain DSM 24068 / PA7) (Pseudomonas aeruginosa (strain PA7)) protein is tRNA pseudouridine synthase B.